The following is a 332-amino-acid chain: uncharacterized protein (332 aa).

The helical transmembrane segment at 27–47 threads the bilayer; the sequence is CAIVFLCVLLILPFLSCCTSL.

The protein localises to the membrane. This is an uncharacterized protein from Treponema pallidum (strain Nichols).